The following is a 435-amino-acid chain: 3-ketoacyl-CoA thiolase (435 aa).

The active-site Acyl-thioester intermediate is cysteine 98. Catalysis depends on proton acceptor residues histidine 391 and cysteine 421.

This sequence belongs to the thiolase-like superfamily. Thiolase family. In terms of assembly, heterotetramer of two alpha chains (FadJ) and two beta chains (FadI).

It localises to the cytoplasm. The catalysed reaction is an acyl-CoA + acetyl-CoA = a 3-oxoacyl-CoA + CoA. Its pathway is lipid metabolism; fatty acid beta-oxidation. Its function is as follows. Catalyzes the final step of fatty acid oxidation in which acetyl-CoA is released and the CoA ester of a fatty acid two carbons shorter is formed. The chain is 3-ketoacyl-CoA thiolase from Vibrio cholerae serotype O1 (strain ATCC 39315 / El Tor Inaba N16961).